Reading from the N-terminus, the 109-residue chain is C-X-C motif chemokine 13 (109 aa).

Positions 1-21 (MRLSTATLLLLLASCLSPGHG) are cleaved as a signal peptide. Cystine bridges form between cysteine 32-cysteine 59 and cysteine 34-cysteine 75.

The protein belongs to the intercrine alpha (chemokine CxC) family. Found in spleen (B-cell-rich zone or follicles), Peyer patches (strongest within germinal centers and extending to the mantle zone) and lymph nodes (in reticular pattern in follicles).

The protein resides in the secreted. Its function is as follows. Strongly chemotactic for B-lymphocytes, weakly for spleen monocytes and macrophages but no chemotactic activity for granulocytes. Binds to BLR1/CXCR5. May play a role in directing the migration of B-lymphocytes to follicles in secondary lymphoid organs. The chain is C-X-C motif chemokine 13 (Cxcl13) from Mus musculus (Mouse).